Consider the following 96-residue polypeptide: Guanyl-specific ribonuclease Sa (96 aa).

Residues Cys7 and Cys96 are joined by a disulfide bond. The active-site Proton acceptor is Glu54. His85 functions as the Proton donor in the catalytic mechanism.

Belongs to the ribonuclease N1/T1 family.

Its subcellular location is the secreted. It catalyses the reaction [RNA] containing guanosine + H2O = an [RNA fragment]-3'-guanosine-3'-phosphate + a 5'-hydroxy-ribonucleotide-3'-[RNA fragment].. In Kitasatospora aureofaciens (Streptomyces aureofaciens), this protein is Guanyl-specific ribonuclease Sa (rnaSA).